The following is a 387-amino-acid chain: Patatin group A-3 (387 aa).

Residues 1–23 (MATTKSFLILIVMILATTSSTFA) form the signal peptide. Residues 32–230 (LSIDGGGVKG…TVADPALLSV (199 aa)) form the PNPLA domain. The GXGXXG signature appears at 36–41 (GGGVKG). A GXSXG motif is present at residues 75–79 (GTSTG). Serine 77 acts as the Nucleophile in catalysis. N-linked (GlcNAc...) asparagine glycosylation occurs at asparagine 115. The active-site Proton acceptor is aspartate 216. Positions 216–218 (DGA) match the DGA/G motif. The stretch at 361 to 385 (ETYEEALKRFAKLLSDRKKLRANKA) forms a coiled coil.

The protein belongs to the patatin family. In terms of tissue distribution, tuber and stolon.

It localises to the vacuole. Probable lipolytic acyl hydrolase (LAH), an activity which is thought to be involved in the response of tubers to pathogens. The protein is Patatin group A-3 of Solanum tuberosum (Potato).